Consider the following 322-residue polypeptide: Acetyl-coenzyme A carboxylase carboxyl transferase subunit alpha (322 aa).

One can recognise a CoA carboxyltransferase C-terminal domain in the interval 30–293; the sequence is ALDISAEITR…RQALQESLRK (264 aa).

This sequence belongs to the AccA family. Acetyl-CoA carboxylase is a heterohexamer composed of biotin carboxyl carrier protein (AccB), biotin carboxylase (AccC) and two subunits each of ACCase subunit alpha (AccA) and ACCase subunit beta (AccD).

The protein localises to the cytoplasm. The enzyme catalyses N(6)-carboxybiotinyl-L-lysyl-[protein] + acetyl-CoA = N(6)-biotinyl-L-lysyl-[protein] + malonyl-CoA. It participates in lipid metabolism; malonyl-CoA biosynthesis; malonyl-CoA from acetyl-CoA: step 1/1. Functionally, component of the acetyl coenzyme A carboxylase (ACC) complex. First, biotin carboxylase catalyzes the carboxylation of biotin on its carrier protein (BCCP) and then the CO(2) group is transferred by the carboxyltransferase to acetyl-CoA to form malonyl-CoA. This is Acetyl-coenzyme A carboxylase carboxyl transferase subunit alpha from Nitrosomonas eutropha (strain DSM 101675 / C91 / Nm57).